A 206-amino-acid polypeptide reads, in one-letter code: Transcription elongation factor A protein-like 5 (206 aa).

Basic and acidic residues predominate over residues 1 to 26 (MEKLYKENEGKPENERNLESEGKPED). Residues 1 to 206 (MEKLYKENEG…QKDLEDVPYV (206 aa)) form a disordered region. A compositionally biased stretch (acidic residues) spans 27 to 42 (EGSTEDEGKSDEEEKP). The segment covering 43–56 (DMEGKTECEGKRED) has biased composition (basic and acidic residues). Positions 57–70 (EGEPGDEGQLEDEG) are enriched in acidic residues. 4 stretches are compositionally biased toward basic and acidic residues: residues 71 to 86 (NQEKQGKSEGEDKPQS), 102 to 113 (AAEKRPAEDYVP), 121 to 160 (DRGTDDSPKDSQEDLQERHLSSEEMMRECGDVSRAQEELR), and 196 to 206 (GQKDLEDVPYV).

It belongs to the TFS-II family. TFA subfamily.

It is found in the nucleus. In terms of biological role, may be involved in transcriptional regulation. The protein is Transcription elongation factor A protein-like 5 (TCEAL5) of Homo sapiens (Human).